Here is a 655-residue protein sequence, read N- to C-terminus: Spastin (655 aa).

Over 1-58 the chain is Cytoplasmic; that stretch reads MLFDLINSFLKNGINNSNNNNNNNNNKNNFYNSLEDDDYLLNNQTTKVSLYLYFFIFA. The segment at residues 59-79 is an intramembrane region (helical); it reads FMFLVVDLIMLYYKHRENIES. The Cytoplasmic segment spans residues 80-655; sequence RETDLSLKLN…EKWNQKFGTI (576 aa). The span at 102-140 shows a compositional bias: low complexity; the sequence is KSSPTTSTTTTTITPTTTSSSQLRQPSTPKTTTKTINSP. The tract at residues 102-151 is disordered; the sequence is KSSPTTSTTTTTITPTTTSSSQLRQPSTPKTTTKTINSPPSTPKSPPPLP. Pro residues predominate over residues 141-151; the sequence is PSTPKSPPPLP. Residues 169–232 enclose the MIT domain; sequence LNEAKSQIDS…KRAEYLKNEL (64 aa). The segment at 261–325 is disordered; sequence EQQQQQQQQS…TITSPGNKYG (65 aa). Positions 262 to 320 are enriched in low complexity; the sequence is QQQQQQQQSSSTYRNSLNLSSSKSNSTINNRHSISSLSSLNSTTATTTTPSNTSTITSP. 424-431 is an ATP binding site; sequence GPPGNGKT.

This sequence belongs to the AAA ATPase family. Spastin subfamily. As to quaternary structure, homohexamer. The homohexamer is stabilized by ATP-binding. The homohexamer may adopt a ring conformation through which microtubules pass prior to being severed. Interacts with microtubules.

The protein resides in the membrane. It is found in the cytoplasm. The protein localises to the cytoskeleton. It localises to the microtubule organizing center. Its subcellular location is the centrosome. It catalyses the reaction n ATP + n H2O + a microtubule = n ADP + n phosphate + (n+1) alpha/beta tubulin heterodimers.. Functionally, ATP-dependent microtubule severing protein. Microtubule severing may promote reorganization of cellular microtubule arrays and the release of microtubules from the microtubule organizing center following nucleation. The sequence is that of Spastin from Dictyostelium discoideum (Social amoeba).